The primary structure comprises 155 residues: uncharacterized protein (155 aa).

Transmembrane regions (helical) follow at residues 33–53 (ITLL…LFLL) and 83–103 (IGAV…GIWV).

This sequence to E.coli YdgK.

It localises to the cell membrane. This is an uncharacterized protein from Synechocystis sp. (strain ATCC 27184 / PCC 6803 / Kazusa).